A 40-amino-acid polypeptide reads, in one-letter code: Photosystem II reaction center protein J (40 aa).

The chain crosses the membrane as a helical span at residues 8–28 (IPLWLIGTVVGTPVISLVGIF).

The protein belongs to the PsbJ family. PSII is composed of 1 copy each of membrane proteins PsbA, PsbB, PsbC, PsbD, PsbE, PsbF, PsbH, PsbI, PsbJ, PsbK, PsbL, PsbM, PsbT, PsbX, PsbY, PsbZ, Psb30/Ycf12, at least 3 peripheral proteins of the oxygen-evolving complex and a large number of cofactors. It forms dimeric complexes.

It localises to the plastid. It is found in the chloroplast thylakoid membrane. Its function is as follows. One of the components of the core complex of photosystem II (PSII). PSII is a light-driven water:plastoquinone oxidoreductase that uses light energy to abstract electrons from H(2)O, generating O(2) and a proton gradient subsequently used for ATP formation. It consists of a core antenna complex that captures photons, and an electron transfer chain that converts photonic excitation into a charge separation. The protein is Photosystem II reaction center protein J of Huperzia lucidula (Shining clubmoss).